A 156-amino-acid polypeptide reads, in one-letter code: ATP synthase subunit b (156 aa).

A helical transmembrane segment spans residues 7 to 27 (LIGQTVAFIIFVWFCMKFVWP).

It belongs to the ATPase B chain family. F-type ATPases have 2 components, F(1) - the catalytic core - and F(0) - the membrane proton channel. F(1) has five subunits: alpha(3), beta(3), gamma(1), delta(1), epsilon(1). F(0) has three main subunits: a(1), b(2) and c(10-14). The alpha and beta chains form an alternating ring which encloses part of the gamma chain. F(1) is attached to F(0) by a central stalk formed by the gamma and epsilon chains, while a peripheral stalk is formed by the delta and b chains.

It is found in the cell inner membrane. In terms of biological role, f(1)F(0) ATP synthase produces ATP from ADP in the presence of a proton or sodium gradient. F-type ATPases consist of two structural domains, F(1) containing the extramembraneous catalytic core and F(0) containing the membrane proton channel, linked together by a central stalk and a peripheral stalk. During catalysis, ATP synthesis in the catalytic domain of F(1) is coupled via a rotary mechanism of the central stalk subunits to proton translocation. Its function is as follows. Component of the F(0) channel, it forms part of the peripheral stalk, linking F(1) to F(0). The polypeptide is ATP synthase subunit b (Shewanella baltica (strain OS185)).